The sequence spans 506 residues: Maturase K (506 aa).

It belongs to the intron maturase 2 family. MatK subfamily.

The protein localises to the plastid. The protein resides in the chloroplast. Usually encoded in the trnK tRNA gene intron. Probably assists in splicing its own and other chloroplast group II introns. This is Maturase K from Wisteria frutescens (American wisteria).